Consider the following 84-residue polypeptide: Large ribosomal subunit protein bL31B (84 aa).

The protein belongs to the bacterial ribosomal protein bL31 family. Type B subfamily. In terms of assembly, part of the 50S ribosomal subunit.

The chain is Large ribosomal subunit protein bL31B from Streptomyces griseus subsp. griseus (strain JCM 4626 / CBS 651.72 / NBRC 13350 / KCC S-0626 / ISP 5235).